Consider the following 995-residue polypeptide: MSRRKQSNPRQIKRSLRDMEAGEEAKAMDSSPKEQEAPDPEAPAIEEPPSPPREDVSPPAVPAPPESPEDPEDMEGQELEMRPQDEEKEEKEEEAAMASPWSGPEELELALQDGQRCVRARLSLTEGLSWGPFYGSIQTRALSPEREEPGPAVTLMVDESCWLRMLPQVLTEEAANSEIYRKDDALWCRVTKVVPSGGLLYVRLVTEPHGAPRHPVQEPVEPGGLAPVHTDIQLLPQQAGMASILATAVINKDVFPCKDCGIWYRSERNLQAHLLYYCASRQRAGSPVSATEEKPKETYPNERVCPFPQCRKSCPSASSLEIHMRSHSGERPFVCLICLSAFTTKANCERHLKVHTDTLSGVCHNCGFISTTRDILYSHLVTNHMVCQPGSKGEIYSPGAGHPAAKLPPDSLAGFQQHSLMHSPLVPADKAPTPSSGLDSKAEVTNGETRVPPQNGGSSESPAAPRTIKVEAAEEPEATRASGPGEPGPQAPSRTPSPHSPNPVRVKTELSSPTPGSSPGPGELTMAGTLFLPQYVFSPDAGTTTVPTAPQASEILAKMSELVHNRLQQGAGSSGAAGTPTGLFSGTKGATCFECEITFNNINNFYVHKRLYCSGRRAPEDPPTVRRPKAATGPARAPAGAAAEPDPSRSSPGPGPREEEASGTTTPEAEAAGRGSEGSQSPGSSVDDAEDDPSRTLCEACNIRFSRHETYTVHKRYYCASRHDPPPRRPPAPTTAPGPAAPALTAPPVRTRRRRKLYELPAAGAPPPAAGPAPVPVVPSPTAELPSSPRPGSASAGPAPALSPSPVPDGPIDLSKRPRRQSPDAPTALPALADYHECTACRVSFHSLEAYLAHKKYSCPAAPLRTTALCPYCPPNGRVRGDLVEHLRQAHGLQVAKPAASPGAEPRTPAERAPRDSPDGRAPRSPSPAPENTPSDPADQGARTPSKGPPAPAPAPGGGGGHRYCRLCNIRFSSLSTFIAHKKYYCSSHAAEHVK.

The span at 1–14 (MSRRKQSNPRQIKR) shows a compositional bias: basic residues. The tract at residues 1–103 (MSRRKQSNPR…EAAMASPWSG (103 aa)) is disordered. Positions 15 to 36 (SLRDMEAGEEAKAMDSSPKEQE) are enriched in basic and acidic residues. 2 stretches are compositionally biased toward acidic residues: residues 67-78 (SPEDPEDMEGQE) and 86-95 (EEKEEKEEEA). Phosphoserine is present on residues serine 99 and serine 143. The CCHC FOG-type 1 zinc finger occupies 249–282 (VINKDVFPCKDCGIWYRSERNLQAHLLYYCASRQ). Zn(2+)-binding residues include cysteine 257, cysteine 260, histidine 273, and cysteine 278. Position 286 is a phosphoserine (serine 286). C2H2-type zinc fingers lie at residues 303–327 (RVCP…MRSH), 333–355 (FVCL…LKVH), and 361–384 (GVCH…VTNH). The tract at residues 343-354 (TTKANCERHLKV) is interaction with TACC3. Residues serine 397, serine 497, and serine 500 each carry the phosphoserine modification. Residues 424 to 526 (PLVPADKAPT…SSPGPGELTM (103 aa)) form a disordered region. A compositionally biased stretch (low complexity) spans 509-525 (ELSSPTPGSSPGPGELT). The CCHC FOG-type 2 zinc-finger motif lies at 584–617 (FSGTKGATCFECEITFNNINNFYVHKRLYCSGRR). The Zn(2+) site is built by cysteine 592, cysteine 595, histidine 608, and cysteine 613. Residues 616 to 694 (RRAPEDPPTV…SVDDAEDDPS (79 aa)) form a disordered region. A compositionally biased stretch (low complexity) spans 630–652 (AATGPARAPAGAAAEPDPSRSSP). Phosphoserine is present on residues serine 651 and serine 684. Residues 690-723 (EDDPSRTLCEACNIRFSRHETYTVHKRYYCASRH) form a CCHC FOG-type 3 zinc finger. Cysteine 698, cysteine 701, histidine 714, and cysteine 719 together coordinate Zn(2+). The interval 721 to 827 (SRHDPPPRRP…PRRQSPDAPT (107 aa)) is disordered. Composition is skewed to pro residues over residues 728 to 740 (RRPP…PGPA) and 764 to 779 (GAPP…PVVP). The span at 785-800 (LPSSPRPGSASAGPAP) shows a compositional bias: low complexity. Phosphoserine is present on serine 803. Residues 811-817 (PIDLSKR) form an interaction with CTBP2 region. Serine 822 carries the post-translational modification Phosphoserine. The CCHC FOG-type 4 zinc finger occupies 830 to 863 (PALADYHECTACRVSFHSLEAYLAHKKYSCPAAP). The Zn(2+) site is built by cysteine 838, cysteine 841, histidine 854, and cysteine 859. The C2H2-type 4 zinc finger occupies 868–891 (ALCPYCPPNGRVRGDLVEHLRQAH). The interval 892–960 (GLQVAKPAAS…APAPAPGGGG (69 aa)) is disordered. The span at 908–922 (TPAERAPRDSPDGRA) shows a compositional bias: basic and acidic residues. 2 positions are modified to phosphoserine: serine 925 and serine 927. Residues 957–990 (GGGGGHRYCRLCNIRFSSLSTFIAHKKYYCSSHA) form a CCHC FOG-type 5 zinc finger. 4 residues coordinate Zn(2+): cysteine 965, cysteine 968, histidine 981, and cysteine 986.

It belongs to the FOG (Friend of GATA) family. In terms of assembly, interacts with the N-terminal zinc-finger of GATA1, GATA2 and GATA3. Interacts with corepressor CTBP2; this interaction is however not essential for corepressor activity in erythropoiesis. Interacts with TACC3. Mainly expressed in hematopoietic tissues. Expressed in the spleen, a primary site of hematopoiesis in the adult mouse, as well as in the liver and testis, but not in the heart, brain, lung, kidney, or skeletal muscle. Among hematopoietic cell lines, it is strongly expressed in erythroid and megakaryocytic cell lines. Expressed at low level in several lymphoid and early myeloid cell lines. Not expressed in mast cell and macrophage lines. Expressed in the heart, where it colocalizes with GATA4, GATA5 and GATA6.

The protein resides in the nucleus. Transcription regulator that plays an essential role in erythroid and megakaryocytic cell differentiation. Essential cofactor that acts via the formation of a heterodimer with transcription factors of the GATA family GATA1, GATA2 and GATA3. Such heterodimer can both activate or repress transcriptional activity, depending on the cell and promoter context. The heterodimer formed with GATA proteins is essential to activate expression of genes such as NFE2, ITGA2B, alpha- and beta-globin, while it represses expression of KLF1. May be involved in regulation of some genes in gonads. May also be involved in cardiac development, in a non-redundant way with ZFPM2/FOG2. The protein is Zinc finger protein ZFPM1 (Zfpm1) of Mus musculus (Mouse).